Consider the following 450-residue polypeptide: Glucose-6-phosphate isomerase (450 aa).

Glu-290 acts as the Proton donor in catalysis. Residues His-311 and Lys-425 contribute to the active site.

The protein belongs to the GPI family.

The protein resides in the cytoplasm. It carries out the reaction alpha-D-glucose 6-phosphate = beta-D-fructose 6-phosphate. It participates in carbohydrate biosynthesis; gluconeogenesis. Its pathway is carbohydrate degradation; glycolysis; D-glyceraldehyde 3-phosphate and glycerone phosphate from D-glucose: step 2/4. Functionally, catalyzes the reversible isomerization of glucose-6-phosphate to fructose-6-phosphate. In Listeria innocua serovar 6a (strain ATCC BAA-680 / CLIP 11262), this protein is Glucose-6-phosphate isomerase.